We begin with the raw amino-acid sequence, 1010 residues long: Signal peptide, CUB and EGF-like domain-containing protein 2 (1010 aa).

The first 24 residues, 1–24 (MGAVWTVRLLCLFLLLLNTRQSAA), serve as a signal peptide directing secretion. Residues 28–68 (NTDQCAEGSDACHIDAICQNTPTSYKCTCKTGFKGDGKHCE) enclose the EGF-like 1; calcium-binding domain. 8 disulfide bridges follow: Cys-32/Cys-45, Cys-39/Cys-54, Cys-56/Cys-67, Cys-73/Cys-85, Cys-81/Cys-94, Cys-96/Cys-109, Cys-115/Cys-126, and Cys-122/Cys-135. An EGF-like 2; calcium-binding domain is found at 69 to 110 (DIDECDVEYNGGCVHECNNIPGNYRCTCLDGFHLAHDGHNCL). An EGF-like 3; calcium-binding domain is found at 111 to 147 (DVDECVFNNGGCQHVCVNTMGSYECRCKQGFFLSDNQ). 2 EGF-like domains span residues 160-196 (CMNKEHGCGHICKESPKGGVACECRPGFELAKNQRGC) and 200-235 (CNHGNGGCQHICEDTEQGPICRCHVRYMLHADGRTC). N-linked (GlcNAc...) asparagine glycosylation occurs at Asn-249. The EGF-like 6 domain occupies 269–304 (CAVNNGGCDSTCKDTSTGVRCSCPVGFTLQPDGKSC). One can recognise an EGF-like 7; calcium-binding domain in the interval 306 to 346 (DIDECELHNGGCDHYCRNTIGSFECSCRKGFKLLTDERSCQ). Intrachain disulfides connect Cys-310-Cys-321, Cys-317-Cys-330, Cys-332-Cys-345, Cys-351-Cys-361, Cys-357-Cys-370, Cys-372-Cys-384, Cys-390-Cys-401, Cys-397-Cys-410, and Cys-412-Cys-425. Residues 347-385 (DIDECFFERTCDHTCVNSPGSFQCVCNKGYTLYGLAHCG) enclose the EGF-like 8; calcium-binding domain. An EGF-like 9; calcium-binding domain is found at 386–426 (DINECSFNNGGCEHTCENTMGSFGCHCRAGYKLHWNKKDCI). Asn-488, Asn-703, Asn-774, and Asn-803 each carry an N-linked (GlcNAc...) asparagine glycan. Cysteines 822 and 848 form a disulfide. The region spanning 822–934 (CGGELGEFTG…KGFQVPYVTY (113 aa)) is the CUB domain. The segment at 860–869 (ILVVVPEIYL) is interaction with the cholesterol-anchor of SHH. Cys-875 and Cys-896 are joined by a disulfide. Residue Asn-982 is glycosylated (N-linked (GlcNAc...) asparagine).

Interacts with SHH via the cholesterol anchor of the dually lipid-modified SHH (ShhNp). Interacts with PTCH1. Forms homooligomers and heterooligomers with SCUBE1 and SCUBE3. Interacts with VEGFR2. N-glycosylated.

Its subcellular location is the secreted. The protein resides in the cell surface. Its function is as follows. Lipid-binding protein required for SHH long-range signaling by binding to the dually lipid-modified SHH (ShhNp) and by promoting ShhNp mobilization, solubilization and release from the cell membrane. Acts by enhancing the proteolytic processing (shedding) of the lipid-modified N- and C- terminal of ShhNp at the cell surface. Synergizes with DISP1 to cause an increase in SHH secretion. Probable cell surface coreceptor for VEGFR2 involved in VEGFR2-mediated angiogenesis. In Danio rerio (Zebrafish), this protein is Signal peptide, CUB and EGF-like domain-containing protein 2 (scube2).